Reading from the N-terminus, the 166-residue chain is uncharacterized protein (166 aa).

The 63-residue stretch at Leu3–Glu65 folds into the HTH asnC-type domain. Residues Leu22–Asp41 constitute a DNA-binding region (H-T-H motif).

This is an uncharacterized protein from Bacillus subtilis (strain 168).